The sequence spans 419 residues: Transcriptional regulator Myc-A (419 aa).

T69 carries an O-linked (GlcNAc) threonine glycan. A 9aaTAD motif is present at residues 87-95; sequence EMVSEFLGD. Disordered regions lie at residues 199–269 and 305–343; these read QPML…PSPL and NNHS…HNVL. Residues 217–245 show a composition bias toward acidic residues; that stretch reads DSEDEEEEDEEEEEEEEEEEEEEEEEEID. Residues 248–262 show a composition bias toward basic and acidic residues; it reads TVEKRQKRHETDASE. A compositionally biased stretch (low complexity) spans 305-315; sequence NNHSINSSSSN. Positions 335–387 constitute a bHLH domain; that stretch reads DKRRTHNVLERQRRNELKLSFFALRDEIPEVANNEKAAKVVILKKATECIHSM. Residues 394–415 are leucine-zipper; sequence LLSIKEQLRRKSEQLKHRLQQL.

As to quaternary structure, efficient DNA binding requires dimerization with another bHLH protein. Binds DNA as a heterodimer with max. In terms of tissue distribution, high levels are seen in the kidney, gills and uterus.

Its subcellular location is the nucleus. Functionally, transcription factor that binds DNA in a non-specific manner, yet also specifically recognizes the core sequence 5'-CAC[GA]TG-3'. Activates the transcription of growth-related genes. The polypeptide is Transcriptional regulator Myc-A (myca) (Danio rerio (Zebrafish)).